A 594-amino-acid polypeptide reads, in one-letter code: Beta-mannosyltransferase 3 (594 aa).

Residues 1 to 6 (MRIRSN) are Cytoplasmic-facing. A helical membrane pass occupies residues 7–27 (VLLLSTAGALALVWFAVVFSW). The Extracellular segment spans residues 28–594 (DDKSIFGIPT…KDEVKDTKAK (567 aa)). Asparagine 305 is a glycosylation site (N-linked (GlcNAc...) asparagine). A coiled-coil region spans residues 512-594 (VTRGEEDRLK…KDEVKDTKAK (83 aa)). Positions 517–558 (EDRLKNKEKERKIEEKRKKEEERKKKEEEKKKKEEEEKKKKE) are enriched in basic and acidic residues. The segment at 517–564 (EDRLKNKEKERKIEEKRKKEEERKKKEEEKKKKEEEEKKKKEEEEEEE) is disordered.

It belongs to the BMT family.

The protein resides in the membrane. Its function is as follows. Beta-mannosyltransferase involved in cell wall biosynthesis. In Komagataella phaffii (strain ATCC 76273 / CBS 7435 / CECT 11047 / NRRL Y-11430 / Wegner 21-1) (Yeast), this protein is Beta-mannosyltransferase 3 (BMT3).